We begin with the raw amino-acid sequence, 220 residues long: Putative GED domain-containing protein DNM1P46 (220 aa).

The segment at 18-46 (VSVETRNVKPQGKDSKAEENGSHSFMHSM) is disordered. Basic and acidic residues predominate over residues 28–38 (QGKDSKAEENG). The region spanning 54-149 (METTQNLVDS…CCPTCTRLGT (96 aa)) is the GED domain. The tract at residues 173–194 (DTPGGVGRAGTAARRDSRGNEK) is disordered. Basic and acidic residues predominate over residues 185–194 (ARRDSRGNEK).

This is Putative GED domain-containing protein DNM1P46 (DNM1P46) from Homo sapiens (Human).